The chain runs to 129 residues: Large ribosomal subunit protein bL20 (129 aa).

The protein belongs to the bacterial ribosomal protein bL20 family.

In terms of biological role, binds directly to 23S ribosomal RNA and is necessary for the in vitro assembly process of the 50S ribosomal subunit. It is not involved in the protein synthesizing functions of that subunit. The chain is Large ribosomal subunit protein bL20 from Mycobacterium tuberculosis (strain ATCC 25177 / H37Ra).